We begin with the raw amino-acid sequence, 251 residues long: Hydroxyacylglutathione hydrolase (251 aa).

Residues histidine 53, histidine 55, aspartate 57, histidine 58, histidine 110, aspartate 127, and histidine 165 each contribute to the Zn(2+) site.

Belongs to the metallo-beta-lactamase superfamily. Glyoxalase II family. As to quaternary structure, monomer. Zn(2+) is required as a cofactor.

The catalysed reaction is an S-(2-hydroxyacyl)glutathione + H2O = a 2-hydroxy carboxylate + glutathione + H(+). The protein operates within secondary metabolite metabolism; methylglyoxal degradation; (R)-lactate from methylglyoxal: step 2/2. Its function is as follows. Thiolesterase that catalyzes the hydrolysis of S-D-lactoyl-glutathione to form glutathione and D-lactic acid. This Citrobacter koseri (strain ATCC BAA-895 / CDC 4225-83 / SGSC4696) protein is Hydroxyacylglutathione hydrolase.